The sequence spans 467 residues: ATP synthase subunit beta, sodium ion specific (467 aa).

151-158 (GGAGVGKT) provides a ligand contact to ATP.

Belongs to the ATPase alpha/beta chains family. In terms of assembly, F-type ATPases have 2 components, CF(1) - the catalytic core - and CF(0) - the membrane proton channel. CF(1) has five subunits: alpha(3), beta(3), gamma(1), delta(1), epsilon(1). CF(0) has three main subunits: a, b and c.

The protein resides in the cell membrane. It catalyses the reaction 4 Na(+)(in) + ATP + H2O = 4 Na(+)(out) + ADP + phosphate + H(+). Produces ATP from ADP in the presence of a sodium ion gradient across the membrane. The beta chain is the catalytic subunit. The polypeptide is ATP synthase subunit beta, sodium ion specific (Propionigenium modestum).